Here is a 319-residue protein sequence, read N- to C-terminus: 4-hydroxy-3-methylbut-2-enyl diphosphate reductase (319 aa).

Cysteine 12 is a [4Fe-4S] cluster binding site. Histidine 41 and histidine 74 together coordinate (2E)-4-hydroxy-3-methylbut-2-enyl diphosphate. The dimethylallyl diphosphate site is built by histidine 41 and histidine 74. Positions 41 and 74 each coordinate isopentenyl diphosphate. Cysteine 97 is a [4Fe-4S] cluster binding site. Histidine 125 contributes to the (2E)-4-hydroxy-3-methylbut-2-enyl diphosphate binding site. Histidine 125 is a dimethylallyl diphosphate binding site. Histidine 125 serves as a coordination point for isopentenyl diphosphate. Glutamate 127 acts as the Proton donor in catalysis. Threonine 168 is a binding site for (2E)-4-hydroxy-3-methylbut-2-enyl diphosphate. Cysteine 198 contacts [4Fe-4S] cluster. (2E)-4-hydroxy-3-methylbut-2-enyl diphosphate-binding residues include serine 226, serine 227, asparagine 228, and serine 270. Positions 226, 227, 228, and 270 each coordinate dimethylallyl diphosphate. Residues serine 226, serine 227, asparagine 228, and serine 270 each coordinate isopentenyl diphosphate.

This sequence belongs to the IspH family. Homodimer. [4Fe-4S] cluster serves as cofactor.

It catalyses the reaction isopentenyl diphosphate + 2 oxidized [2Fe-2S]-[ferredoxin] + H2O = (2E)-4-hydroxy-3-methylbut-2-enyl diphosphate + 2 reduced [2Fe-2S]-[ferredoxin] + 2 H(+). The enzyme catalyses dimethylallyl diphosphate + 2 oxidized [2Fe-2S]-[ferredoxin] + H2O = (2E)-4-hydroxy-3-methylbut-2-enyl diphosphate + 2 reduced [2Fe-2S]-[ferredoxin] + 2 H(+). It participates in isoprenoid biosynthesis; dimethylallyl diphosphate biosynthesis; dimethylallyl diphosphate from (2E)-4-hydroxy-3-methylbutenyl diphosphate: step 1/1. It functions in the pathway isoprenoid biosynthesis; isopentenyl diphosphate biosynthesis via DXP pathway; isopentenyl diphosphate from 1-deoxy-D-xylulose 5-phosphate: step 6/6. Catalyzes the conversion of 1-hydroxy-2-methyl-2-(E)-butenyl 4-diphosphate (HMBPP) into a mixture of isopentenyl diphosphate (IPP) and dimethylallyl diphosphate (DMAPP). Acts in the terminal step of the DOXP/MEP pathway for isoprenoid precursor biosynthesis. In Hamiltonella defensa subsp. Acyrthosiphon pisum (strain 5AT), this protein is 4-hydroxy-3-methylbut-2-enyl diphosphate reductase.